Consider the following 977-residue polypeptide: Macrophage colony-stimulating factor 1 receptor (977 aa).

A signal peptide spans 1 to 19; that stretch reads MELGPPLVLLLATVWHGQG. At 20-515 the chain is on the extracellular side; sequence APVIEPSGPE…QLPDESLFTP (496 aa). 5 Ig-like C2-type domains span residues 24–104, 107–197, 204–298, 299–397, and 398–503; these read EPSG…VKDP, SWNL…KVNR, QIKL…VVES, AYLN…LTLR, and YPPE…SLGQ. Intrachain disulfides connect cysteine 42–cysteine 84, cysteine 127–cysteine 177, and cysteine 224–cysteine 278. N-linked (GlcNAc...) asparagine glycosylation is found at asparagine 45 and asparagine 73. Asparagine 302, asparagine 335, asparagine 389, asparagine 410, asparagine 449, asparagine 478, and asparagine 491 each carry an N-linked (GlcNAc...) asparagine glycan. Cysteine 417 and cysteine 483 form a disulfide bridge. A helical membrane pass occupies residues 516–536; it reads VVVACMSVMSLLVLLLLLLLY. Residues 537–977 are Cytoplasmic-facing; the sequence is KYKQKPKYQV…LLQPNNYQFC (441 aa). Residues 540–572 form a regulatory juxtamembrane domain region; the sequence is QKPKYQVRWKIIERYEGNSYTFIDPTQLPYNEK. Phosphotyrosine; by autocatalysis is present on residues tyrosine 544 and tyrosine 559. Positions 580–913 constitute a Protein kinase domain; it reads LQFGKTLGAG…ICFLLQEQAR (334 aa). Residues 586–594 and lysine 614 contribute to the ATP site; that span reads LGAGAFGKV. Residues tyrosine 697 and tyrosine 706 each carry the phosphotyrosine; by autocatalysis modification. Serine 711 bears the Phosphoserine mark. Position 721 is a phosphotyrosine; by autocatalysis (tyrosine 721). Residue aspartate 776 is the Proton acceptor of the active site. The tract at residues 794-816 is activation loop; that stretch reads DFGLARDIMNDSNYVVKGNARLP. 2 positions are modified to phosphotyrosine; by autocatalysis: tyrosine 807 and tyrosine 921. Residues 921–957 are disordered; sequence YANLPSSGGSSGSDSGGGSSGGSSSEPEEESSSEHLA. The segment covering 929–941 has biased composition (gly residues); it reads GSSGSDSGGGSSG. Tyrosine 974 carries the phosphotyrosine; by autocatalysis modification.

This sequence belongs to the protein kinase superfamily. Tyr protein kinase family. CSF-1/PDGF receptor subfamily. In terms of assembly, monomer. Homodimer. Interacts with CSF1 and IL34. Interaction with dimeric CSF1 or IL34 leads to receptor homodimerization. Interacts with INPPL1/SHIP2 and THOC5. Interacts (tyrosine phosphorylated) with PLCG2 (via SH2 domain). Interacts (tyrosine phosphorylated) with PIK3R1 (via SH2 domain). Interacts (tyrosine phosphorylated) with FYN, YES1 and SRC (via SH2 domain). Interacts (tyrosine phosphorylated) with CBL, GRB2 and SLA2. In terms of processing, autophosphorylated in response to CSF1 or IL34 binding. Phosphorylation at Tyr-559 is important for normal down-regulation of signaling by ubiquitination, internalization and degradation. Phosphorylation at Tyr-559 and Tyr-807 is important for interaction with SRC family members, including FYN, YES1 and SRC, and for subsequent activation of these protein kinases. Phosphorylation at Tyr-697 and Tyr-921 is important for interaction with GRB2. Phosphorylation at Tyr-721 is important for interaction with PIK3R1. Phosphorylation at Tyr-721 and Tyr-807 is important for interaction with PLCG2. Phosphorylation at Tyr-974 is important for interaction with CBL. Dephosphorylation by PTPN2 negatively regulates downstream signaling and macrophage differentiation. Ubiquitinated. Becomes rapidly polyubiquitinated after autophosphorylation, leading to its degradation. In terms of tissue distribution, widely expressed.

It is found in the cell membrane. It catalyses the reaction L-tyrosyl-[protein] + ATP = O-phospho-L-tyrosyl-[protein] + ADP + H(+). Present in an inactive conformation in the absence of bound ligand. CSF1 or IL34 binding leads to dimerization and activation by autophosphorylation on tyrosine residues. Inhibited by imatinib/STI-571 (Gleevec), dasatinib, sunitinib/SU11248, lestaurtinib/CEP-701, midostaurin/PKC-412, Ki20227, linifanib/ABT-869, Axitinib/AG013736, sorafenib/BAY 43-9006 and GW2580. Functionally, tyrosine-protein kinase that acts as a cell-surface receptor for CSF1 and IL34 and plays an essential role in the regulation of survival, proliferation and differentiation of hematopoietic precursor cells, especially mononuclear phagocytes, such as macrophages and monocytes. Promotes the release of pro-inflammatory chemokines in response to IL34 and CSF1, and thereby plays an important role in innate immunity and in inflammatory processes. Plays an important role in the regulation of osteoclast proliferation and differentiation, the regulation of bone resorption, and is required for normal bone and tooth development. Required for normal male and female fertility, and for normal development of milk ducts and acinar structures in the mammary gland during pregnancy. Promotes reorganization of the actin cytoskeleton, regulates formation of membrane ruffles, cell adhesion and cell migration, and promotes cancer cell invasion. Activates several signaling pathways in response to ligand binding, including the ERK1/2 and the JNK pathway. Phosphorylates PIK3R1, PLCG2, GRB2, SLA2 and CBL. Activation of PLCG2 leads to the production of the cellular signaling molecules diacylglycerol and inositol 1,4,5-trisphosphate, that then lead to the activation of protein kinase C family members, especially PRKCD. Phosphorylation of PIK3R1, the regulatory subunit of phosphatidylinositol 3-kinase, leads to activation of the AKT1 signaling pathway. Activated CSF1R also mediates activation of the MAP kinases MAPK1/ERK2 and/or MAPK3/ERK1, and of the SRC family kinases SRC, FYN and YES1. Activated CSF1R transmits signals both via proteins that directly interact with phosphorylated tyrosine residues in its intracellular domain, or via adapter proteins, such as GRB2. Promotes activation of STAT family members STAT3, STAT5A and/or STAT5B. Promotes tyrosine phosphorylation of SHC1 and INPP5D/SHIP-1. Receptor signaling is down-regulated by protein phosphatases, such as INPP5D/SHIP-1, that dephosphorylate the receptor and its downstream effectors, and by rapid internalization of the activated receptor. In the central nervous system, may play a role in the development of microglia macrophages. The sequence is that of Macrophage colony-stimulating factor 1 receptor (Csf1r) from Mus musculus (Mouse).